A 20-amino-acid polypeptide reads, in one-letter code: Collagenolytic protease 35 kDa 2 (20 aa).

In terms of domain architecture, Peptidase S1 spans Ile-1–Asp-20. The disordered stretch occupies residues Ile-1–Asp-20.

It belongs to the peptidase S1 family.

It catalyses the reaction Hydrolysis of proteins, with broad specificity for peptide bonds. Native collagen is cleaved about 75% of the length of the molecule from the N-terminus. Low activity on small molecule substrates of both trypsin and chymotrypsin.. In terms of biological role, this enzyme is a serine protease capable of degrading the native triple helix of collagen. The chain is Collagenolytic protease 35 kDa 2 from Chionoecetes opilio (Atlantic snow crab).